The primary structure comprises 371 residues: Peptidyl-prolyl cis-trans isomerase CPR6 (371 aa).

Positions 7–174 constitute a PPIase cyclophilin-type domain; the sequence is FFDISIGGKP…RDVKIDDCGV (168 aa). 3 TPR repeats span residues 219-252, 270-303, and 308-341; these read IETVKNIGTEQFKKQNYSVALEKYVKCDKFLKEY, VSIPLNIAICALKLKDYKQVLVASSEVLYAEAAD, and AKALYRRGLAYYHVNDTDMALNDLEMATTFQPND.

This sequence belongs to the cyclophilin-type PPIase family. PPIase D subfamily. In terms of assembly, interacts with RPD3.

It is found in the cytoplasm. It catalyses the reaction [protein]-peptidylproline (omega=180) = [protein]-peptidylproline (omega=0). Its function is as follows. PPIases accelerate the folding of proteins. It catalyzes the cis-trans isomerization of proline imidic peptide bonds in oligopeptides. The polypeptide is Peptidyl-prolyl cis-trans isomerase CPR6 (CPR6) (Saccharomyces cerevisiae (strain ATCC 204508 / S288c) (Baker's yeast)).